Consider the following 389-residue polypeptide: Probable peptide chain release factor 1, mitochondrial (389 aa).

Position 259 is an N5-methylglutamine (Gln-259).

This sequence belongs to the prokaryotic/mitochondrial release factor family. In terms of processing, methylation of glutamine in the GGQ triplet is conserved from bacteria to mammals.

The protein resides in the mitochondrion. Its function is as follows. Mitochondrial peptide chain release factor that directs the termination of translation in response to the peptide chain termination codons UAA and UAG. The protein is Probable peptide chain release factor 1, mitochondrial of Caenorhabditis elegans.